A 315-amino-acid polypeptide reads, in one-letter code: Cobalamin biosynthesis protein CobD (315 aa).

The next 5 membrane-spanning stretches (helical) occupy residues 48–70, 75–94, 148–170, 208–230, and 292–314; these read IAGI…LSVQ, LHWI…TIAI, LVDG…AMLY, ITSY…SLYI, and LILL…AAYF.

Belongs to the CobD/CbiB family.

It localises to the cell membrane. It functions in the pathway cofactor biosynthesis; adenosylcobalamin biosynthesis. Converts cobyric acid to cobinamide by the addition of aminopropanol on the F carboxylic group. This chain is Cobalamin biosynthesis protein CobD, found in Leptospira interrogans serogroup Icterohaemorrhagiae serovar copenhageni (strain Fiocruz L1-130).